The primary structure comprises 245 residues: NLP effector protein Pc118551 (245 aa).

The first 19 residues, 1–19, serve as a signal peptide directing secretion; that stretch reads MNLRAFLLSAVAALVAVQA. Positions 121–127 match the Hepta-peptide GHRHDWE motif motif; sequence QRRHLWE. Asparagine 140 carries N-linked (GlcNAc...) asparagine glycosylation.

Belongs to the Necrosis inducing protein (NPP1) family.

The protein resides in the secreted. In terms of biological role, secreted effector that contributes strongly to virulence during infection by P.capsici. This Phytophthora capsici protein is NLP effector protein Pc118551.